A 392-amino-acid polypeptide reads, in one-letter code: Pyruvate synthase subunit PorA (392 aa).

Heterotetramer of one alpha, one beta, one delta and one gamma chain.

The enzyme catalyses 2 oxidized [2Fe-2S]-[ferredoxin] + pyruvate + CoA = 2 reduced [2Fe-2S]-[ferredoxin] + acetyl-CoA + CO2 + H(+). This is Pyruvate synthase subunit PorA (porA) from Thermotoga maritima (strain ATCC 43589 / DSM 3109 / JCM 10099 / NBRC 100826 / MSB8).